Reading from the N-terminus, the 1129-residue chain is MFRRTLNRLCAGEEKRVGTRTVFVGNHPISGTEPYIAQRFCDNRIVSSKYTLWNFLPKNLFEQFRRIANFYFLIIFLVQVTVDTPTSPVTSGLPLFFVITVTAIKQGYEDWLRHRADNEVNKSAVYIIENAKRVRKESEKIKVGDVVEVQANETFPCDLILLSSCTTDGTCYVTTASLDGESNCKTHYAVRDTIALCTAESIDNLRATIECEQPQPDLYRFVGRISIYSNSIEAVARSLGPENLLLKGATLKNTKKIYGVAVYTGMETKMALNYQGKSQKCSAVEKSINAFLIVYLFILLTKAAVCTTLKYVWQSSPYNDEPWYNQKTQKERETFQVLKMFTDFLSFMVLFNFIIPVSMYVTVEMQKFLGSFFISWDKDFFDEEINEGALVNTSDLNEELGQVDYVFTDKTGTLTENSMEFIECCIDGHKYKGTTQEVDGLSQTDGPLAYFDKADKNREALFLRALCLCHTVEMKTNDDVDGPVEGAGFTYISSSPDEIALVKGAKRFGFTFLGNQNGYIRVENQRKEIEEYELLHTLNFDSVRRRMSVIVRTQKGDILLFCKGADSSIFPRVHSHQIELTKDHVERNAMDGYRTLCVAFKEIPPDDFERINAQLVEAKMALQDREEKLEKVFDEIETNMNLIGATAVEDKLQDQAAETIEALHAAGLKVWVLTGDKMETAKSTCYACRLFQTNTELLELTTKTIEESERKEDRLHELLIEYRKKLLHEFPKSTRSLKKAWTEHQEYGLIIDGSTLSLILNSSQDCSSNNYKSIFLQICMKCTAVLCCRMAPLQKAQIVRMVKNLKGSPITLSIGDGANDVSMILESHVGIGIKGKEGRQAARNSDYSVPKFKHLKKLLLVHGHLYYVRIAHLVQYFFYKNLCFILPQFLYQFFCGFSQQPLYDAAYLTMYNICFTSLPILAYSLLEQHINIDTLTADPRLYMKITGNAMLQLGPFLHWTFLAAFEGTVFFFGTYFLFQTSSLEDNGKIYGNWTFGTIVFTVLVFTVTLKLALDTRFWTWINHFVIWGSLAFYVFFSFFWGGIIWPFLKQQRMYFVFAQMLCSVSTWLAIILLIFISLFPEILLIVVKNVRRRSARRNLSCRRASDSLSARPSVRPLLLRTFSDESNIL.

Residues 1 to 83 lie on the Cytoplasmic side of the membrane; the sequence is MFRRTLNRLC…IIFLVQVTVD (83 aa). Residues 84–104 traverse the membrane as a helical segment; it reads TPTSPVTSGLPLFFVITVTAI. Residues 105–287 lie on the Extracellular side of the membrane; the sequence is KQGYEDWLRH…SQKCSAVEKS (183 aa). Residues 288-308 form a helical membrane-spanning segment; the sequence is INAFLIVYLFILLTKAAVCTT. The Cytoplasmic segment spans residues 309–343; it reads LKYVWQSSPYNDEPWYNQKTQKERETFQVLKMFTD. The chain crosses the membrane as a helical span at residues 344–364; the sequence is FLSFMVLFNFIIPVSMYVTVE. Residues 365 to 876 are Extracellular-facing; it reads MQKFLGSFFI…YVRIAHLVQY (512 aa). D409 serves as the catalytic 4-aspartylphosphate intermediate. D409, K410, and T411 together coordinate ATP. Mg(2+) is bound at residue D409. T411 contacts Mg(2+). S442 is subject to Phosphoserine. ATP contacts are provided by E498, F540, K563, and R594. A coiled-coil region spans residues 607-643; it reads DFERINAQLVEAKMALQDREEKLEKVFDEIETNMNLI. ATP-binding residues include T674, G675, and D676. The stretch at 695-726 forms a coiled coil; that stretch reads TELLELTTKTIEESERKEDRLHELLIEYRKKL. ATP is bound by residues R789 and K795. D816 contacts Mg(2+). The ATP site is built by N819 and D820. D820 contacts Mg(2+). Residues 877 to 897 form a helical membrane-spanning segment; that stretch reads FFYKNLCFILPQFLYQFFCGF. Residues 898-905 are Cytoplasmic-facing; that stretch reads SQQPLYDA. Residues 906-926 traverse the membrane as a helical segment; it reads AYLTMYNICFTSLPILAYSLL. At 927 to 952 the chain is on the extracellular side; the sequence is EQHINIDTLTADPRLYMKITGNAMLQ. The helical transmembrane segment at 953–973 threads the bilayer; the sequence is LGPFLHWTFLAAFEGTVFFFG. Residues 974–988 are Cytoplasmic-facing; it reads TYFLFQTSSLEDNGK. Residues 989-1009 traverse the membrane as a helical segment; the sequence is IYGNWTFGTIVFTVLVFTVTL. Residues 1010-1023 lie on the Extracellular side of the membrane; that stretch reads KLALDTRFWTWINH. A helical membrane pass occupies residues 1024–1044; the sequence is FVIWGSLAFYVFFSFFWGGII. Topologically, residues 1045–1066 are cytoplasmic; that stretch reads WPFLKQQRMYFVFAQMLCSVST. A helical transmembrane segment spans residues 1067 to 1087; sequence WLAIILLIFISLFPEILLIVV. Over 1088–1129 the chain is Extracellular; the sequence is KNVRRRSARRNLSCRRASDSLSARPSVRPLLLRTFSDESNIL. 3 positions are modified to phosphoserine: S1105, S1113, and S1123. Positions 1113–1118 match the Di-leucine motif motif; that stretch reads SVRPLL.

Belongs to the cation transport ATPase (P-type) (TC 3.A.3) family. Type IV subfamily. As to quaternary structure, component of a P4-ATPase flippase complex which consists of a catalytic alpha subunit ATP11C and an accessory beta subunit TMEM30A. The cofactor is Mg(2+). In terms of processing, proteolytically cleaved by CASP3, CASP6 and CASP7. Phosphorylated at Ser-1113 likely by PRKCA; this creates a functional di-leucine motif that is sufficient for endocytosis. As to expression, widely expressed. Expressed in retina, brain, liver and testes (at protein level). Expressed in lung, bone marrow, lymph nodes, prostate, ovary and uterus. Expressed in fetus.

Its subcellular location is the cell membrane. The protein localises to the endoplasmic reticulum membrane. It localises to the early endosome membrane. It is found in the recycling endosome membrane. The catalysed reaction is ATP + H2O + phospholipidSide 1 = ADP + phosphate + phospholipidSide 2.. It catalyses the reaction a 1,2-diacyl-sn-glycero-3-phospho-L-serine(out) + ATP + H2O = a 1,2-diacyl-sn-glycero-3-phospho-L-serine(in) + ADP + phosphate + H(+). It carries out the reaction a 1,2-diacyl-sn-glycero-3-phosphoethanolamine(out) + ATP + H2O = a 1,2-diacyl-sn-glycero-3-phosphoethanolamine(in) + ADP + phosphate + H(+). In terms of biological role, catalytic component of a P4-ATPase flippase complex which catalyzes the hydrolysis of ATP coupled to the transport of aminophospholipids, phosphatidylserines (PS) and phosphatidylethanolamines (PE), from the outer to the inner leaflet of the plasma membrane. Major PS-flippase in immune cell subsets. In erythrocyte plasma membrane, it is required to maintain PS in the inner leaflet preventing its exposure on the surface. This asymmetric distribution is critical for the survival of erythrocytes in circulation since externalized PS is a phagocytic signal for erythrocyte clearance by splenic macrophages. Required for B cell differentiation past the pro-B cell stage. Seems to mediate PS flipping in pro-B cells. May be involved in the transport of cholestatic bile acids. In Mus musculus (Mouse), this protein is Phospholipid-transporting ATPase 11C.